The sequence spans 649 residues: Protein WHI4 (649 aa).

2 positions are modified to phosphoserine: S22 and S206. Disordered stretches follow at residues 196–217 and 228–247; these read EHVSSGTTNSSPKNYQLSSSAQ and ISYGKTSSSPLGPSAAKPRP. Positions 228–238 are enriched in polar residues; the sequence is ISYGKTSSSPL. Phosphoserine occurs at positions 258 and 283. Disordered regions lie at residues 438-461 and 604-649; these read LDLNLQTENGHPQSSAPNGSSIFN and QLPH…YGKS. In terms of domain architecture, RRM spans 533–625; that stretch reads NTLYVGNLPP…GGIRLSFSKN (93 aa). Over residues 631 to 649 the composition is skewed to polar residues; sequence GSNSRSKSGYSFNGSYGKS.

Phosphorylated by PKA in vitro.

The protein localises to the cytoplasm. Functionally, has a partially redundant function to WHI3, a dosage-dependent modulator of cell size. The chain is Protein WHI4 (WHI4) from Saccharomyces cerevisiae (strain ATCC 204508 / S288c) (Baker's yeast).